The sequence spans 1356 residues: Pleckstrin homology domain-containing family H member 1 (1356 aa).

Residues 27–172 (FRLQASKIRE…QDALEDLRMT (146 aa)) adopt a coiled-coil conformation. Disordered stretches follow at residues 179 to 203 (VVPE…EQDS), 256 to 314 (HLQK…PKVR), and 354 to 414 (LHSP…PPLH). Composition is skewed to polar residues over residues 194–203 (PSDQPVEQDS), 256–265 (HLQKEGSPSQ), and 285–297 (VTAQ…GTKT). Residues 359–407 (SSKSEARAKVREEAEKMEMEALPPSGKQEERESLKSRRGELEDVELENK) adopt a coiled-coil conformation. Composition is skewed to basic and acidic residues over residues 362–377 (SEAR…KMEM) and 385–399 (KQEE…RGEL). Serine 451 carries the phosphoserine modification. PH domains are found at residues 572–666 (ALEK…SLLK) and 681–790 (KPTV…VAAG). Serine 739 carries the phosphoserine modification. The MyTH4 domain occupies 826 to 980 (YSQEGLCASL…PSRMEVVSIL (155 aa)). The FERM domain occupies 991–1327 (FSIPVHFANG…NHCSATVNLS (337 aa)).

The sequence is that of Pleckstrin homology domain-containing family H member 1 (Plekhh1) from Mus musculus (Mouse).